The chain runs to 309 residues: Aurora kinase C (309 aa).

Residues 1 to 33 (MSSPRAVVQLGKAQPAGEELATANQTAQQPSSP) form a disordered region. Residues 22-32 (TANQTAQQPSS) are compositionally biased toward polar residues. Residues 43-293 (FEIGRPLGKG…LAQILKHPWV (251 aa)) enclose the Protein kinase domain. Residues 49-57 (LGKGKFGNV) and Lys-72 each bind ATP. Asp-166 functions as the Proton acceptor in the catalytic mechanism. Thr-198 carries the phosphothreonine; by PKA modification. The segment at 292-309 (WVQAHSRRVLPPCAQMAS) is interaction with BIRC5.

This sequence belongs to the protein kinase superfamily. Ser/Thr protein kinase family. Aurora subfamily. As to quaternary structure, component of the chromosomal passenger complex (CPC) composed of at least BIRC5/survivin, CDCA8/borealin, INCENP, AURKB or AURKC; predominantly independent AURKB- and AURKC-containing complexes exist; in the complex interacts directly with BIRC5/survivin and INCENP. Interacts with TACC1. Isoform 1 and isoform 2 are expressed in testis. Elevated expression levels were seen only in a subset of cancer cell lines such as Hep-G2, Huh-7 and HeLa. Expression is maximum at M phase.

The protein resides in the nucleus. The protein localises to the chromosome. It localises to the centromere. It is found in the cytoplasm. Its subcellular location is the cytoskeleton. The protein resides in the spindle. It catalyses the reaction L-seryl-[protein] + ATP = O-phospho-L-seryl-[protein] + ADP + H(+). The enzyme catalyses L-threonyl-[protein] + ATP = O-phospho-L-threonyl-[protein] + ADP + H(+). With respect to regulation, okadaic acid, an inhibitor of protein phosphatase 1 (PP1), protein phosphatase 2A (PP2A) and protein phosphatase 5 (PP5), increases AURKC activity. AURKC is also stabilized through its interaction with INCENP, which also acts as an activator. Functionally, serine/threonine-protein kinase component of the chromosomal passenger complex (CPC), a complex that acts as a key regulator of mitosis. The CPC complex has essential functions at the centromere in ensuring correct chromosome alignment and segregation and is required for chromatin-induced microtubule stabilization and spindle assembly. Also plays a role in meiosis and more particularly in spermatogenesis. Has redundant cellular functions with AURKB and can rescue an AURKB knockdown. Like AURKB, AURKC phosphorylates histone H3 at 'Ser-10' and 'Ser-28'. AURKC phosphorylates the CPC complex subunits BIRC5/survivin and INCENP leading to increased AURKC activity. Phosphorylates TACC1, another protein involved in cell division, at 'Ser-228'. The chain is Aurora kinase C (AURKC) from Homo sapiens (Human).